The following is a 284-amino-acid chain: D-tagatose-1,6-bisphosphate aldolase subunit GatY (284 aa).

The Proton donor role is filled by aspartate 82. Histidine 83 and histidine 180 together coordinate Zn(2+). Glycine 181 serves as a coordination point for dihydroxyacetone phosphate. Zn(2+) is bound at residue histidine 208. Dihydroxyacetone phosphate is bound by residues 209 to 211 and 230 to 233; these read GAS and NVAT.

It belongs to the class II fructose-bisphosphate aldolase family. TagBP aldolase GatY subfamily. As to quaternary structure, forms a complex with GatZ. Zn(2+) is required as a cofactor.

It carries out the reaction D-tagatofuranose 1,6-bisphosphate = D-glyceraldehyde 3-phosphate + dihydroxyacetone phosphate. It functions in the pathway carbohydrate metabolism; D-tagatose 6-phosphate degradation; D-glyceraldehyde 3-phosphate and glycerone phosphate from D-tagatose 6-phosphate: step 2/2. In terms of biological role, catalytic subunit of the tagatose-1,6-bisphosphate aldolase GatYZ, which catalyzes the reversible aldol condensation of dihydroxyacetone phosphate (DHAP or glycerone-phosphate) with glyceraldehyde 3-phosphate (G3P) to produce tagatose 1,6-bisphosphate (TBP). Requires GatZ subunit for full activity and stability. Is involved in the catabolism of galactitol. In Shigella boydii serotype 4 (strain Sb227), this protein is D-tagatose-1,6-bisphosphate aldolase subunit GatY.